The chain runs to 95 residues: Aspartyl/glutamyl-tRNA(Asn/Gln) amidotransferase subunit C (95 aa).

Belongs to the GatC family. Heterotrimer of A, B and C subunits.

It catalyses the reaction L-glutamyl-tRNA(Gln) + L-glutamine + ATP + H2O = L-glutaminyl-tRNA(Gln) + L-glutamate + ADP + phosphate + H(+). It carries out the reaction L-aspartyl-tRNA(Asn) + L-glutamine + ATP + H2O = L-asparaginyl-tRNA(Asn) + L-glutamate + ADP + phosphate + 2 H(+). Allows the formation of correctly charged Asn-tRNA(Asn) or Gln-tRNA(Gln) through the transamidation of misacylated Asp-tRNA(Asn) or Glu-tRNA(Gln) in organisms which lack either or both of asparaginyl-tRNA or glutaminyl-tRNA synthetases. The reaction takes place in the presence of glutamine and ATP through an activated phospho-Asp-tRNA(Asn) or phospho-Glu-tRNA(Gln). This is Aspartyl/glutamyl-tRNA(Asn/Gln) amidotransferase subunit C from Clostridium botulinum (strain 657 / Type Ba4).